Reading from the N-terminus, the 505-residue chain is Protein disulfide-isomerase A3 (505 aa).

Positions Met1 to Ala24 are cleaved as a signal peptide. Residues Ser25–Gly133 form the Thioredoxin 1 domain. Residues Cys57 and Cys60 each act as nucleophile in the active site. Cys57 and Cys60 are joined by a disulfide. Lys61 bears the N6-methyllysine mark. Cys85 and Cys92 are oxidised to a cystine. An N6-succinyllysine modification is found at Lys129. Lys152 bears the N6-acetyllysine mark. An N6-succinyllysine modification is found at Lys218. An N6-acetyllysine modification is found at Lys252. Phosphothreonine is present on Thr319. A Thioredoxin 2 domain is found at Ser343 to Thr485. Residue Lys362 is modified to N6-acetyllysine. Catalysis depends on nucleophile residues Cys406 and Cys409. Cysteines 406 and 409 form a disulfide. The disordered stretch occupies residues Ala484–Leu505. Residues Gln491–Leu505 are compositionally biased toward basic and acidic residues. Residue Lys494 is modified to N6-acetyllysine. Positions Gln502–Leu505 match the Prevents secretion from ER motif.

As to quaternary structure, part of the major histocompatibility complex class I (MHC I) peptide loading complex composed of TAP1, TAP2, B2M, MHC heavy chain, TAPBP, PDIA3, and CALR. Interacts with ERP27 and CANX. Interacts with SERPINA2 and with the S and Z variants of SERPINA1. Interacts with ATP2A2. In terms of processing, within the major histocompatibility complex class I (MHC I) peptide loading complex forms reversible disulfide-linked heterodimers with TAPBP as part of its protein folding chaperone activity. This is essential to assist the dynamic assembly of the MHC I complex with high affinity antigens in the endoplasmic reticulum. Phosphorylated. Detected in the flagellum and head region of spermatozoa (at protein level). Expressed in liver, stomach and colon (at protein level). Expressed in gastric parietal cells and chief cells (at protein level).

It localises to the endoplasmic reticulum. The protein localises to the endoplasmic reticulum lumen. The protein resides in the melanosome. It catalyses the reaction Catalyzes the rearrangement of -S-S- bonds in proteins.. Its activity is regulated as follows. Association with calcitriol does not affect its enzymatic activity. Functionally, protein disulfide isomerase that catalyzes the formation, isomerization, and reduction or oxidation of disulfide bonds in client proteins and functions as a protein folding chaperone. Core component of the major histocompatibility complex class I (MHC I) peptide loading complex where it functions as an essential folding chaperone for TAPBP. Through TAPBP, assists the dynamic assembly of the MHC I complex with high affinity antigens in the endoplasmic reticulum. Therefore, plays a crucial role in the presentation of antigens to cytotoxic T cells in adaptive immunity. The sequence is that of Protein disulfide-isomerase A3 from Homo sapiens (Human).